Reading from the N-terminus, the 126-residue chain is MAVTKKRKEKKNVYEGNVYIQATFNNTIITVTDLQGNALSWASSGGLGFNGAKKSTPFAAQTVAEAAVQKAQQCGLREVHVFVKGPGIGRESAIRMLGTMGLRVRSIRDITPIPHNGCRPRKTRRI.

The protein belongs to the universal ribosomal protein uS11 family. In terms of assembly, part of the 30S ribosomal subunit. Interacts with proteins S7 and S18. Binds to IF-3.

Located on the platform of the 30S subunit, it bridges several disparate RNA helices of the 16S rRNA. Forms part of the Shine-Dalgarno cleft in the 70S ribosome. In Treponema pallidum (strain Nichols), this protein is Small ribosomal subunit protein uS11.